The primary structure comprises 291 residues: Lys-63-specific deubiquitinase BRCC36 (291 aa).

A2 is modified (N-acetylalanine). The region spanning 12 to 179 (VHLESDAFLV…YTCFQSIQAQ (168 aa)) is the MPN domain. H122, H124, and D135 together coordinate Zn(2+). A JAMM motif motif is present at residues 122-135 (HSHPHITVWPSHVD). S233 is modified (phosphoserine).

The protein belongs to the peptidase M67A family. BRCC36 subfamily. As to quaternary structure, component of the ARISC complex, at least composed of UIMC1/RAP80, ABRAXAS1, BRCC3/BRCC36, BABAM2 and BABAM1/NBA1. Component of the BRCA1-A complex, at least composed of BRCA1, BARD1, UIMC1/RAP80, ABRAXAS1, BRCC3/BRCC36, BABAM2 and BABAM1/NBA1. In the BRCA1-A complex, interacts directly with ABRAXAS1 and BABAM2. Component of the BRISC complex, at least composed of ABRAXAS2, BRCC3/BRCC36, BABAM2 and BABAM1/NBA1. Identified in a complex with SHMT2 and the other subunits of the BRISC complex. In the BRISC complex, interacts directly with ABRAXAS2. Identified in a complex with ABRAXAS2 and NUMA1. The BRISC complex interacts with the CSN complex. Component of the BRCA1/BRCA2 containing complex (BRCC), which also contains BRCA1, BRCA2, BARD1, BABAM2 and RAD51. BRCC is a ubiquitin E3 ligase complex that enhances cellular survival following DNA damage. Interacts with BRCA1. Binds polyubiquitin. Interacts with PWWP2B. Interacts with HDAC1; this interaction is enhanced in the presence of PWWP2B. Requires Zn(2+) as cofactor.

It localises to the nucleus. The protein resides in the cytoplasm. The protein localises to the cytoskeleton. Its subcellular location is the spindle pole. Metalloprotease that specifically cleaves 'Lys-63'-linked polyubiquitin chains. Does not have activity toward 'Lys-48'-linked polyubiquitin chains. Component of the BRCA1-A complex, a complex that specifically recognizes 'Lys-63'-linked ubiquitinated histones H2A and H2AX at DNA lesions sites, leading to target the BRCA1-BARD1 heterodimer to sites of DNA damage at double-strand breaks (DSBs). In the BRCA1-A complex, it specifically removes 'Lys-63'-linked ubiquitin on histones H2A and H2AX, antagonizing the RNF8-dependent ubiquitination at double-strand breaks (DSBs). Catalytic subunit of the BRISC complex, a multiprotein complex that specifically cleaves 'Lys-63'-linked ubiquitin in various substrates. Mediates the specific 'Lys-63'-specific deubiquitination associated with the COP9 signalosome complex (CSN), via the interaction of the BRISC complex with the CSN complex. The BRISC complex is required for normal mitotic spindle assembly and microtubule attachment to kinetochores via its role in deubiquitinating NUMA1. Plays a role in interferon signaling via its role in the deubiquitination of the interferon receptor IFNAR1; deubiquitination increases IFNAR1 activity by enhancing its stability and cell surface expression. Acts as a regulator of the NLRP3 inflammasome by mediating deubiquitination of NLRP3, leading to NLRP3 inflammasome assembly. Down-regulates the response to bacterial lipopolysaccharide (LPS) via its role in IFNAR1 deubiquitination. Deubiquitinates HDAC1 and PWWP2B leading to their stabilization. The sequence is that of Lys-63-specific deubiquitinase BRCC36 (Brcc3) from Mus musculus (Mouse).